Consider the following 206-residue polypeptide: Phosphatidyl-N-methylethanolamine N-methyltransferase (206 aa).

Topologically, residues 1 to 20 (MKESVQEIIQQLIHSVDLQS) are lumenal. The helical intramembrane region spans 21 to 41 (SKFQLAIVCTMFNPIFWNIVA). Topologically, residues 42-53 (RMEYHKHSLTKM) are lumenal. A helical membrane pass occupies residues 54–74 (CGGARKGCYMLAATIFSLGIV). Residues 75-101 (RDMVYESALREQPTCSLITGENWTKLG) lie on the Cytoplasmic side of the membrane. A helical transmembrane segment spans residues 102–122 (VALFGLGQVLVLSSMYKLGIT). 106-108 (GLG) serves as a coordination point for S-adenosyl-L-methionine. Over 123–165 (GTYLGDYFGILMDERVTGFPFNVSNNPMYQGSTLSFLGIALYK) the chain is Lumenal. A helical membrane pass occupies residues 166–186 (GKPAGLVVSAVVYFMYKIALR). The Cytoplasmic portion of the chain corresponds to 187–206 (WEEPFTAMIYANRDKAKKNM). 188 to 189 (EE) provides a ligand contact to S-adenosyl-L-methionine.

Belongs to the class VI-like SAM-binding methyltransferase superfamily. PEMT/PEM2 methyltransferase family.

It localises to the endoplasmic reticulum membrane. The protein localises to the mitochondrion membrane. It catalyses the reaction a 1,2-diacyl-sn-glycero-3-phosphoethanolamine + S-adenosyl-L-methionine = a 1,2-diacyl-sn-glycero-3-phospho-N-methylethanolamine + S-adenosyl-L-homocysteine + H(+). The enzyme catalyses a 1,2-diacyl-sn-glycero-3-phospho-N-methylethanolamine + S-adenosyl-L-methionine = a 1,2-diacyl-sn-glycero-3-phospho-N,N-dimethylethanolamine + S-adenosyl-L-homocysteine + H(+). The catalysed reaction is a 1,2-diacyl-sn-glycero-3-phospho-N,N-dimethylethanolamine + S-adenosyl-L-methionine = a 1,2-diacyl-sn-glycero-3-phosphocholine + S-adenosyl-L-homocysteine + H(+). It participates in phospholipid metabolism; phosphatidylcholine biosynthesis. Functionally, catalyzes the second two steps of the methylation pathway of phosphatidylcholine biosynthesis, the SAM-dependent methylation of phosphatidylmonomethylethanolamine (PMME) to phosphatidyldimethylethanolamine (PDME) and of PDME to phosphatidylcholine (PC). Can also catalyze the first methylation reaction of PE to PMME in the absence of PE methyltransferase CHO2. This Saccharomyces cerevisiae (strain ATCC 204508 / S288c) (Baker's yeast) protein is Phosphatidyl-N-methylethanolamine N-methyltransferase.